We begin with the raw amino-acid sequence, 178 residues long: Translation initiation factor IF-3 (178 aa).

The interval Met-1 to Asp-20 is disordered.

The protein belongs to the IF-3 family. Monomer.

The protein resides in the cytoplasm. Functionally, IF-3 binds to the 30S ribosomal subunit and shifts the equilibrium between 70S ribosomes and their 50S and 30S subunits in favor of the free subunits, thus enhancing the availability of 30S subunits on which protein synthesis initiation begins. This Brucella anthropi (strain ATCC 49188 / DSM 6882 / CCUG 24695 / JCM 21032 / LMG 3331 / NBRC 15819 / NCTC 12168 / Alc 37) (Ochrobactrum anthropi) protein is Translation initiation factor IF-3.